A 508-amino-acid chain; its full sequence is Small ribosomal subunit protein mS47 (508 aa).

The protein belongs to the enoyl-CoA hydratase/isomerase family. Mitochondrion-specific ribosomal protein mS47 subfamily. Component of the mitochondrial small ribosomal subunit (mt-SSU). Mature N.crassa 74S mitochondrial ribosomes consist of a small (37S) and a large (54S) subunit. The 37S small subunit contains a 16S ribosomal RNA (16S mt-rRNA) and 32 different proteins. The 54S large subunit contains a 23S rRNA (23S mt-rRNA) and 42 different proteins. mS47 forms a protuberance of the N.crassa mitoribosome and retains a solvent-exposed cavity liekly capable of accommodating a substrate, in accordance with it being an active enzyme as well as an integral constituent of the mitoribosome.

Its subcellular location is the mitochondrion. It carries out the reaction 3-hydroxy-2-methylpropanoyl-CoA + H2O = 3-hydroxy-2-methylpropanoate + CoA + H(+). In terms of biological role, component of the mitochondrial ribosome (mitoribosome), a dedicated translation machinery responsible for the synthesis of mitochondrial genome-encoded proteins, including at least some of the essential transmembrane subunits of the mitochondrial respiratory chain. The mitoribosomes are attached to the mitochondrial inner membrane and translation products are cotranslationally integrated into the membrane. mS47 has enzymatic activity in vitro, and is able to catalyze the specific hydrolysis of 3-hydroxyisobutyryl-CoA (HIBYL-CoA). However, because the turnover rate of mS47 is only a fraction of that of the homologous mammalian enzyme, the physiological function of this activity remains unclear. The polypeptide is Small ribosomal subunit protein mS47 (ehd3) (Neurospora crassa (strain ATCC 24698 / 74-OR23-1A / CBS 708.71 / DSM 1257 / FGSC 987)).